The chain runs to 301 residues: GTPase Era (301 aa).

One can recognise an Era-type G domain in the interval 7 to 175; it reads YCGFIAIVGR…AGIVRKHLPE (169 aa). Residues 15–22 form a G1 region; it reads GRPNVGKS. A GTP-binding site is contributed by 15 to 22; that stretch reads GRPNVGKS. A G2 region spans residues 41-45; it reads QTTRH. The tract at residues 62–65 is G3; the sequence is DTPG. GTP is bound by residues 62-66 and 124-127; these read DTPGL and NKVD. The segment at 124 to 127 is G4; that stretch reads NKVD. Residues 154–156 are G5; the sequence is LSA. Residues 198 to 283 enclose the KH type-2 domain; it reads IREKLMRFLG…HLELWVKVKS (86 aa).

Belongs to the TRAFAC class TrmE-Era-EngA-EngB-Septin-like GTPase superfamily. Era GTPase family. In terms of assembly, monomer.

The protein localises to the cytoplasm. It localises to the cell inner membrane. Its function is as follows. An essential GTPase that binds both GDP and GTP, with rapid nucleotide exchange. Plays a role in 16S rRNA processing and 30S ribosomal subunit biogenesis and possibly also in cell cycle regulation and energy metabolism. The chain is GTPase Era from Enterobacter sp. (strain 638).